We begin with the raw amino-acid sequence, 102 residues long: Small ribosomal subunit protein uS10 (102 aa).

The protein belongs to the universal ribosomal protein uS10 family. As to quaternary structure, part of the 30S ribosomal subunit.

Its function is as follows. Involved in the binding of tRNA to the ribosomes. The chain is Small ribosomal subunit protein uS10 from Moorella thermoacetica (strain ATCC 39073 / JCM 9320).